The primary structure comprises 96 residues: Putative pterin-4-alpha-carbinolamine dehydratase (96 aa).

Belongs to the pterin-4-alpha-carbinolamine dehydratase family.

The catalysed reaction is (4aS,6R)-4a-hydroxy-L-erythro-5,6,7,8-tetrahydrobiopterin = (6R)-L-erythro-6,7-dihydrobiopterin + H2O. The sequence is that of Putative pterin-4-alpha-carbinolamine dehydratase from Prochlorococcus marinus (strain MIT 9303).